The following is a 189-amino-acid chain: Holliday junction branch migration complex subunit RuvA (189 aa).

The segment at 1–63 is domain I; sequence MIYAMYGVLE…DDEISLYGFS (63 aa). A domain II region spans residues 64 to 135; that stretch reads DVLKLKLFEK…ELKDSMKEFD (72 aa). Residues 135 to 139 are flexible linker; the sequence is DVTLT. The domain III stretch occupies residues 140 to 189; that stretch reads EKDKKILEAIEALVTLGFSRNQSKKAVTQILKKDDSLDDIIKKALKFLSR.

Belongs to the RuvA family. Homotetramer. Forms an RuvA(8)-RuvB(12)-Holliday junction (HJ) complex. HJ DNA is sandwiched between 2 RuvA tetramers; dsDNA enters through RuvA and exits via RuvB. An RuvB hexamer assembles on each DNA strand where it exits the tetramer. Each RuvB hexamer is contacted by two RuvA subunits (via domain III) on 2 adjacent RuvB subunits; this complex drives branch migration. In the full resolvosome a probable DNA-RuvA(4)-RuvB(12)-RuvC(2) complex forms which resolves the HJ.

The protein resides in the cytoplasm. In terms of biological role, the RuvA-RuvB-RuvC complex processes Holliday junction (HJ) DNA during genetic recombination and DNA repair, while the RuvA-RuvB complex plays an important role in the rescue of blocked DNA replication forks via replication fork reversal (RFR). RuvA specifically binds to HJ cruciform DNA, conferring on it an open structure. The RuvB hexamer acts as an ATP-dependent pump, pulling dsDNA into and through the RuvAB complex. HJ branch migration allows RuvC to scan DNA until it finds its consensus sequence, where it cleaves and resolves the cruciform DNA. The protein is Holliday junction branch migration complex subunit RuvA of Thermosipho melanesiensis (strain DSM 12029 / CIP 104789 / BI429).